Reading from the N-terminus, the 206-residue chain is Ribonuclease HII (206 aa).

One can recognise an RNase H type-2 domain in the interval 14 to 206; sequence EFICGIDEVG…FKLRQLGEKV (193 aa). 3 residues coordinate a divalent metal cation: aspartate 20, glutamate 21, and aspartate 117.

The protein belongs to the RNase HII family. The cofactor is Mn(2+). It depends on Mg(2+) as a cofactor.

It is found in the cytoplasm. The catalysed reaction is Endonucleolytic cleavage to 5'-phosphomonoester.. Endonuclease that specifically degrades the RNA of RNA-DNA hybrids. This chain is Ribonuclease HII, found in Chlorobium chlorochromatii (strain CaD3).